The following is a 199-amino-acid chain: DnaJ homolog subfamily C member 5B (199 aa).

Serine 14 and serine 16 each carry phosphoserine. A J domain is found at 19 to 84; the sequence is ALYEILGLHK…SKRNIYDKYG (66 aa).

As to quaternary structure, interacts with the chaperone complex consisting of HSC70 and SGTA. In terms of processing, palmitoylated.

The protein resides in the membrane. The polypeptide is DnaJ homolog subfamily C member 5B (DNAJC5B) (Bos taurus (Bovine)).